A 337-amino-acid polypeptide reads, in one-letter code: 2-oxoglutarate receptor 1 (337 aa).

Topologically, residues 1–34 (MNEPLDYLANASDFPDYAAAFGNCTDENIPLKMH) are extracellular. Asn10 and Asn23 each carry an N-linked (GlcNAc...) asparagine glycan. A helical transmembrane segment spans residues 35 to 55 (YLPVIYGIIFLVGFPGNAVVI). Topologically, residues 56 to 69 (STYIFKMRPWKSST) are cytoplasmic. A helical transmembrane segment spans residues 70–90 (IIMLNLACTDLLYLTSLPFLI). Over 91–116 (HYYASGENWIFGDFMCKFIRFSFHFN) the chain is Extracellular. Residues Cys106 and Cys183 are joined by a disulfide bond. Residues 117-137 (LYSSILFLTCFSIFRYCVIIH) form a helical membrane-spanning segment. At 138 to 151 (PMSCFSIHKTRCAV) the chain is on the cytoplasmic side. Residues 152 to 172 (VACAVVWIISLVAVIPMTFLI) form a helical membrane-spanning segment. Topologically, residues 173–201 (TSTNRTNRSACLDLTSSDELNTIKWYNLI) are extracellular. N-linked (GlcNAc...) asparagine glycans are attached at residues Asn176 and Asn179. The chain crosses the membrane as a helical span at residues 202 to 222 (LTATTFCLPLVIVTLCYTTII). Topologically, residues 223 to 242 (HTLTHGLQTDSCLKQKARRL) are cytoplasmic. The chain crosses the membrane as a helical span at residues 243 to 263 (TILLLLAFYVCFLPFHILRVI). Residues 264 to 284 (RIESRLLSISCSIENQIHEAY) are Extracellular-facing. Residues 285-305 (IVSRPLAALNTFGNLLLYVVV) traverse the membrane as a helical segment. The Cytoplasmic segment spans residues 306–337 (SDNFQQAVCSTVRCKVSGNLEQAKKISYSNNP).

Belongs to the G-protein coupled receptor 1 family. Detected in kidney and, to a lower extent, in placenta. Not detected in brain tissues including the frontal cortex, caudate putamen, thalamus, hypothalamus, hippocampus or pons.

It is found in the cell membrane. Its function is as follows. G protein-coupled receptor for dicarboxylates and amino dicarboxylates. Receptor for itaconate, a metabolite produced by myeloid lineages. In the respiratory epithelium, couples the binding of itaconate to the activation of GNA11 and downstream intracellular Ca(2+) release, leading to mucocilliary clearance of airborne pathogens. Receptor for leukotriene E4 (LTE4) produced by mast cells upon allergic inflammation. Binds with high affinity to LTE4 and elicits mucin release from pulmonary epithelium in response to airborne fungi allergens. Regulates mucin-producing goblet cell homeostasis. Receptor for alpha-ketoglutarate produced by proximal tubule renal cells upon metabolic alkalosis. In an intrarenal paracrine signaling pathway, binds alpha-ketoglutarate and drives transepithelial salt reabsorption and bicarbonate secretion by SLC26A4/pendrin-positive intercalated cells. This is 2-oxoglutarate receptor 1 (OXGR1) from Homo sapiens (Human).